Reading from the N-terminus, the 61-residue chain is Large ribosomal subunit protein uL30 (61 aa).

The protein belongs to the universal ribosomal protein uL30 family. As to quaternary structure, part of the 50S ribosomal subunit.

This Mycolicibacterium gilvum (strain PYR-GCK) (Mycobacterium gilvum (strain PYR-GCK)) protein is Large ribosomal subunit protein uL30.